A 270-amino-acid chain; its full sequence is Undecaprenyl-diphosphatase (270 aa).

The next 7 membrane-spanning stretches (helical) occupy residues 1-21 (MTWW…FIPV), 92-112 (FRLG…YVLF), 119-139 (AFGS…LLLL), 150-170 (LSGV…VPGI), 193-213 (FSFL…GLEL), 223-243 (LSLG…IYVV), and 250-270 (GNLQ…LWLL).

It belongs to the UppP family.

It localises to the cell inner membrane. It catalyses the reaction di-trans,octa-cis-undecaprenyl diphosphate + H2O = di-trans,octa-cis-undecaprenyl phosphate + phosphate + H(+). Its function is as follows. Catalyzes the dephosphorylation of undecaprenyl diphosphate (UPP). Confers resistance to bacitracin. The polypeptide is Undecaprenyl-diphosphatase (Salinibacter ruber (strain DSM 13855 / M31)).